The chain runs to 60 residues: Potassium channel toxin MeuTXKalpha3 (60 aa).

An N-terminal signal peptide occupies residues 1-22 (MKNYCGIITLFLAIISATGVFC). Disulfide bonds link C32/C50, C37/C55, and C41/C57. P59 bears the Proline amide mark.

Belongs to the short scorpion toxin superfamily. Potassium channel inhibitor family. As to expression, expressed by the venom gland.

The protein resides in the secreted. In terms of biological role, may block voltage-gated potassium channels (Kv). This Mesobuthus eupeus (Lesser Asian scorpion) protein is Potassium channel toxin MeuTXKalpha3.